Consider the following 406-residue polypeptide: Acetate kinase (406 aa).

Mg(2+) is bound at residue asparagine 8. Lysine 15 contributes to the ATP binding site. Arginine 92 lines the substrate pocket. Aspartate 149 acts as the Proton donor/acceptor in catalysis. ATP is bound by residues 209 to 213 (HLGNG), 283 to 285 (DFR), and 331 to 335 (GVGEN). Glutamate 385 provides a ligand contact to Mg(2+).

Belongs to the acetokinase family. In terms of assembly, homodimer. The cofactor is Mg(2+). Requires Mn(2+) as cofactor.

Its subcellular location is the cytoplasm. The enzyme catalyses acetate + ATP = acetyl phosphate + ADP. It functions in the pathway metabolic intermediate biosynthesis; acetyl-CoA biosynthesis; acetyl-CoA from acetate: step 1/2. In terms of biological role, catalyzes the formation of acetyl phosphate from acetate and ATP. Can also catalyze the reverse reaction. In Corynebacterium aurimucosum (strain ATCC 700975 / DSM 44827 / CIP 107346 / CN-1) (Corynebacterium nigricans), this protein is Acetate kinase.